Consider the following 87-residue polypeptide: Cell division topological specificity factor (87 aa).

Belongs to the MinE family.

In terms of biological role, prevents the cell division inhibition by proteins MinC and MinD at internal division sites while permitting inhibition at polar sites. This ensures cell division at the proper site by restricting the formation of a division septum at the midpoint of the long axis of the cell. The polypeptide is Cell division topological specificity factor (Neisseria meningitidis serogroup C (strain 053442)).